We begin with the raw amino-acid sequence, 588 residues long: Calcium/calmodulin-dependent protein kinase kinase 2 (588 aa).

Residues 1–11 (MSSCVSSQPTS) show a composition bias toward polar residues. Disordered regions lie at residues 1–34 (MSSC…KPCE) and 64–147 (DLNL…PTVE). An N-acetylserine modification is found at Ser2. Phosphoserine occurs at positions 99, 114, 129, 133, and 137. The segment covering 101–116 (QEPSQGGPASSSNSLD) has biased composition (polar residues). Over residues 124-139 (PSLSYSPASSPQSSPR) the composition is skewed to low complexity. A Protein kinase domain is found at 165–446 (YTLKDEIGKG…VPEIKLHPWV (282 aa)). ATP-binding positions include 171–179 (IGKGSYGVV) and Lys194. The RP domain stretch occupies residues 204–226 (QAGFPRRPPPRGARPAPGGCIQP). The tract at residues 205–225 (AGFPRRPPPRGARPAPGGCIQ) is disordered. The active-site Proton acceptor is Asp312. The interval 472–477 (ENSVKH) is autoinhibitory domain. The calmodulin-binding stretch occupies residues 475-500 (VKHIPSLATVILVKTMIRKRSFGNPF). Phosphoserine occurs at positions 495, 511, 522, and 572. A disordered region spans residues 497–588 (GNPFEGSRRE…LQPEEVMEPE (92 aa)). Positions 521-536 (PTREWEPLSEPKEARQ) are enriched in basic and acidic residues. Positions 570-580 (PGSPPRMPPLQ) are enriched in pro residues.

This sequence belongs to the protein kinase superfamily. Ser/Thr protein kinase family. Interacts with calmodulin. Post-translationally, autophosphorylated and phosphorylated by PKA. Each isoform may show a different pattern of phosphorylation. Expressed in all tissues tested. A differential expression pattern compared to CAMKK1 is observed in the brain.

The protein localises to the nucleus. It is found in the cytoplasm. It localises to the cell projection. The protein resides in the neuron projection. The catalysed reaction is L-seryl-[protein] + ATP = O-phospho-L-seryl-[protein] + ADP + H(+). It catalyses the reaction L-threonyl-[protein] + ATP = O-phospho-L-threonyl-[protein] + ADP + H(+). With respect to regulation, activated by Ca(2+)/calmodulin. Binding of calmodulin may relieve intrasteric autoinhibition. Autophosphorylation does not alter activity or regulation by Ca(2+)/calmodulin. In part, activity is independent on Ca(2+)/calmodulin. Calcium/calmodulin-dependent protein kinase belonging to a proposed calcium-triggered signaling cascade involved in a number of cellular processes. Phosphorylates CAMK1, CAMK4 and CAMK1D. Efficiently phosphorylates 5'-AMP-activated protein kinase (AMPK) trimer, including that consisting of PRKAA1, PRKAB1 and PRKAG1. This phosphorylation is stimulated in response to Ca(2+) signals. May play a role in neurite growth. Isoform 2 may promote neurite elongation, while isoform 1 may promoter neurite branching. May be involved in hippocampal activation of CREB1. The protein is Calcium/calmodulin-dependent protein kinase kinase 2 (Camkk2) of Mus musculus (Mouse).